The following is a 125-amino-acid chain: Holo-[acyl-carrier-protein] synthase (125 aa).

Residues Asp8 and Glu57 each contribute to the Mg(2+) site.

The protein belongs to the P-Pant transferase superfamily. AcpS family. It depends on Mg(2+) as a cofactor.

It localises to the cytoplasm. It carries out the reaction apo-[ACP] + CoA = holo-[ACP] + adenosine 3',5'-bisphosphate + H(+). Transfers the 4'-phosphopantetheine moiety from coenzyme A to a Ser of acyl-carrier-protein. This is Holo-[acyl-carrier-protein] synthase from Koribacter versatilis (strain Ellin345).